Here is a 361-residue protein sequence, read N- to C-terminus: Polygalacturonase (361 aa).

The N-terminal stretch at 1–18 is a signal peptide; that stretch reads MISANSLLISTLCAFAIA. A disulfide bridge connects residues cysteine 27 and cysteine 43. 5 PbH1 repeats span residues 155–185, 186–207, 208–228, 237–258, and 266–288; these read CSDL…DVGS, SSNV…AVNS, GSTI…SVGS, VNGF…RIKT, and VTNV…VIEG. Aspartate 200 acts as the Proton donor in catalysis. The cysteines at positions 202 and 218 are disulfide-linked. Histidine 222 is an active-site residue. 2 N-linked (GlcNAc...) asparagine glycosylation sites follow: asparagine 318 and asparagine 330. An intrachain disulfide couples cysteine 350 to cysteine 361.

This sequence belongs to the glycosyl hydrolase 28 family.

It carries out the reaction (1,4-alpha-D-galacturonosyl)n+m + H2O = (1,4-alpha-D-galacturonosyl)n + (1,4-alpha-D-galacturonosyl)m.. The protein is Polygalacturonase (PGU1) of Saccharomyces cerevisiae (strain ATCC 204508 / S288c) (Baker's yeast).